A 514-amino-acid chain; its full sequence is L-threonine dehydratase biosynthetic IlvA (514 aa).

The residue at position 62 (lysine 62) is an N6-(pyridoxal phosphate)lysine. Pyridoxal 5'-phosphate-binding positions include asparagine 89, 188 to 192 (GGGGL), and serine 315. 2 consecutive ACT-like domains span residues 339-411 (ALLA…DLSD) and 434-504 (RLYS…DETN).

Belongs to the serine/threonine dehydratase family. Homotetramer. Requires pyridoxal 5'-phosphate as cofactor.

It catalyses the reaction L-threonine = 2-oxobutanoate + NH4(+). The protein operates within amino-acid biosynthesis; L-isoleucine biosynthesis; 2-oxobutanoate from L-threonine: step 1/1. Isoleucine allosterically inhibits whereas valine allosterically activates this enzyme. Its function is as follows. Catalyzes the anaerobic formation of alpha-ketobutyrate and ammonia from threonine in a two-step reaction. The first step involved a dehydration of threonine and a production of enamine intermediates (aminocrotonate), which tautomerizes to its imine form (iminobutyrate). Both intermediates are unstable and short-lived. The second step is the nonenzymatic hydrolysis of the enamine/imine intermediates to form 2-ketobutyrate and free ammonia. In the low water environment of the cell, the second step is accelerated by RidA. This Escherichia coli (strain K12) protein is L-threonine dehydratase biosynthetic IlvA (ilvA).